The sequence spans 571 residues: Cilia- and flagella-associated protein 52 (571 aa).

WD repeat units lie at residues 62–106 (GHGN…LLAR), 109–150 (LHKG…AICG), 156–195 (LNVGNATNVIFSRCRDEMFVTAGNGTIRVWELDLPNRKIW), 288–327 (QSQGGITSITLRGEGHQFFVGTEESHIYRVSFTDFKETLI), 330–364 (CHFEAVEDIVFPFGTAELFATCAKKDIRVWHTSSN), 366–405 (AHRIGVTAIATTSDCKRVISGGGEGEVRVWQIGCQTQKLE), 410–449 (EHKSSVSCIRVKKNNEECVTASTDGTCIIWDLVRLRRNQM), 451–490 (LANTLFQCVCYHPEEFQIITSGTDRKIAYWEVFDGTVIRE), 494–533 (SLSGSINGMDITQEGVHFVTGGNDHLVKVWDYNEGEVTHV), and 536–571 (GHSGNITRIRISPGNQYIVSVSADGAILRWKYPYTS).

The protein belongs to the CFAP52 family. Microtubule inner protein component of sperm flagellar doublet microtubules. Interacts with BRCA2. Interacts with the CCT chaperonin complex. Interacts with HSP70. Interacts with AK8. Interacts with CFAP45. Interacts with DNAI1. Interacts with IQDC.

The protein localises to the cytoplasm. Its subcellular location is the cytoskeleton. The protein resides in the cilium axoneme. It localises to the flagellum axoneme. Functionally, microtubule inner protein (MIP) part of the dynein-decorated doublet microtubules (DMTs) in cilia axoneme. Important for proper ciliary and flagellar beating. May act in cooperation with CFAP45 and axonemal dynein subunit DNAH11. May play a role in cell growth and/or survival. The sequence is that of Cilia- and flagella-associated protein 52 from Macaca fascicularis (Crab-eating macaque).